The sequence spans 410 residues: LanC-like protein GCR2 (410 aa).

Zn(2+) is bound by residues cysteine 283, cysteine 328, and histidine 329.

Belongs to the LanC-like protein family. In terms of assembly, may interact (via C-terminus) with GPA1.

In terms of biological role, may play a role in abscisic acid (ABA) signaling. The polypeptide is LanC-like protein GCR2 (GCR2) (Arabidopsis thaliana (Mouse-ear cress)).